Reading from the N-terminus, the 702-residue chain is Cytolytic toxin-alpha (702 aa).

A structural MACPF/CDC pore-forming domain region spans residues Ser2–Ser265. 5 N-linked (GlcNAc...) asparagine glycosylation sites follow: Asn93, Asn100, Asn201, Asn287, and Asn311. The segment at Gln266–Ala385 is structural FAT domain. The segment at Val386–Val513 is thioredoxin (THX) domain. The B30.2/SPRY domain maps to Ile505–Leu702. N-linked (GlcNAc...) asparagine glycosylation occurs at Asn530.

This sequence belongs to the SNTX/VTX toxin family. Heterodimer of alpha and beta subunits; non-covalently linked. Also associates into tetramers or even higher aggregates. In terms of processing, intrachain disulfide bonds may be present in the heterodimer. In terms of tissue distribution, expressed by the venom gland.

The protein localises to the secreted. This heterodimer induces potent hemolytic activities (when tested on rabbit erythrocytes, EC(50)=25-56 ng/mL) due to its ability to form pores in the cell membrane. The pore may be composed of 10 alpha/beta heterodimers. The toxin shows cardiovascular effects that include a vasorelaxant action that may involve the L-arginine-nitric oxid synthase pathway. In addition, it displays edema-inducing activities, increases vascular permeability. It also shows myotoxic activities and interferes irreversibly with neuromuscular function. It also induces irreversible platelet aggregation in rabbit or rat (but not in human or mouse) whole blood. In addition, it has been observed to increase spontaneous quantal acetylcholine release from isolated frog cutaneous pectoris motor endings. This is Cytolytic toxin-alpha from Scorpaena plumieri (Spotted scorpionfish).